Reading from the N-terminus, the 293-residue chain is EID1-like F-box protein 1 (293 aa).

Positions 16-68 (QCTKGHLNEDVLLLVFQHLNWNPKLVATLSCVCRWFDDFAKRVLWKEFCKTRA) constitute an F-box domain. A disordered region spans residues 245–293 (AIPSEDNNHTEKKQDNGFPRENVLKRRNSLLGGSENGPPPQKRLTNPNQ). Residues 250–259 (DNNHTEKKQD) show a composition bias toward basic and acidic residues.

In Arabidopsis thaliana (Mouse-ear cress), this protein is EID1-like F-box protein 1 (EDL1).